The sequence spans 351 residues: Protein EXPRESSION OF TERPENOIDS 1 (351 aa).

Residues 1 to 23 form a disordered region; sequence MANFFSLGGNQEQQHQEISSSQA. Low complexity predominate over residues 11–22; sequence QEQQHQEISSSQ. Positions 129, 132, 140, 145, 149, and 156 each coordinate Zn(2+). A DNA-binding region (zn(2)-C6 fungal-type; degenerate) is located at residues 129 to 156; that stretch reads CQDCGNQAKKDCQHMRCRTCCKSRGFQC. Positions 170–219 are disordered; sequence RRERQQQLAALQQQQQGHNNNNNNHKNKRQREDPSASSLVSTRLPSNTNG. The segment covering 175-193 has biased composition (low complexity); that stretch reads QQLAALQQQQQGHNNNNNN. The span at 204 to 219 shows a compositional bias: polar residues; that stretch reads SASSLVSTRLPSNTNG. The Required for homo- and heterodimerization motif lies at 258 to 261; sequence IGGH. The interval 286–320 is disordered; it reads TSSGGSAGGVQHHHHNSAAVATATTTSGGDATAAG. Residues 303-320 show a composition bias toward low complexity; sequence AAVATATTTSGGDATAAG.

It belongs to the SHI protein family. In terms of assembly, forms homodimers and heterodimers with LRP1.

The protein resides in the nucleus. Its function is as follows. Transcription activator involved in the transcriptional regulation of terpene biosynthesis in glandular trichomes. Binds to the promoter of the linalool synthase TPS5 and promotes TPS5 gene transactivation. Acts synergistically with MYC1 in the transactivation of TPS5. The polypeptide is Protein EXPRESSION OF TERPENOIDS 1 (Solanum lycopersicum (Tomato)).